The following is a 479-amino-acid chain: Ribosomal RNA small subunit methyltransferase F (479 aa).

Residues 125–131, glutamate 149, aspartate 176, and aspartate 194 each bind S-adenosyl-L-methionine; that span reads AAAPGSK. Cysteine 247 (nucleophile) is an active-site residue.

Belongs to the class I-like SAM-binding methyltransferase superfamily. RsmB/NOP family.

The protein localises to the cytoplasm. The catalysed reaction is cytidine(1407) in 16S rRNA + S-adenosyl-L-methionine = 5-methylcytidine(1407) in 16S rRNA + S-adenosyl-L-homocysteine + H(+). Specifically methylates the cytosine at position 1407 (m5C1407) of 16S rRNA. The polypeptide is Ribosomal RNA small subunit methyltransferase F (Salmonella agona (strain SL483)).